Reading from the N-terminus, the 881-residue chain is Lon protease (881 aa).

Basic and acidic residues predominate over residues 1–24 (MAKNTDIEHDAHEPAGHGDVRESA). The tract at residues 1–77 (MAKNTDIEHD…RAGEAEKGVP (77 aa)) is disordered. The span at 49–59 (QTDTESAQGAA) shows a compositional bias: polar residues. Over residues 65–77 (EVQRAGEAEKGVP) the composition is skewed to basic and acidic residues. In terms of domain architecture, Lon N-terminal spans 94 to 287 (VHLIPLTGRP…EVFVYIKKEK (194 aa)). An ATP-binding site is contributed by 440–447 (GPPGVGKT). The 183-residue stretch at 679–861 (ANKVGTAVGL…EEVLSLAFPK (183 aa)) folds into the Lon proteolytic domain. Residues serine 767 and lysine 810 contribute to the active site.

It belongs to the peptidase S16 family. In terms of assembly, homohexamer. Organized in a ring with a central cavity.

It localises to the cytoplasm. The catalysed reaction is Hydrolysis of proteins in presence of ATP.. ATP-dependent serine protease that mediates the selective degradation of mutant and abnormal proteins as well as certain short-lived regulatory proteins. Required for cellular homeostasis and for survival from DNA damage and developmental changes induced by stress. Degrades polypeptides processively to yield small peptide fragments that are 5 to 10 amino acids long. Binds to DNA in a double-stranded, site-specific manner. The protein is Lon protease of Treponema pallidum (strain Nichols).